The chain runs to 575 residues: Hemagglutinin-neuraminidase (575 aa).

Basic and acidic residues predominate over residues 1 to 10 (MDGDRGKRDS). The segment at 1–27 (MDGDRGKRDSYWSTSPSGSTTKPASGW) is disordered. The Intravirion segment spans residues 1-37 (MDGDRGKRDSYWSTSPSGSTTKPASGWERSSKADTWL). The interval 10–14 (SYWST) is incorporation in virion. Residues 11 to 23 (YWSTSPSGSTTKP) show a composition bias toward polar residues. Residues 38–58 (LILSFTQWALSIATVIICIII) form a helical; Signal-anchor for type II membrane protein membrane-spanning segment. Residues 59–140 (SARQGYSMKE…RQELTQHCES (82 aa)) form an interaction with F protein region. Over 59 to 575 (SARQGYSMKE…SIPKLCKAES (517 aa)) the chain is Virion surface. Asparagine 77 carries N-linked (GlcNAc...) asparagine; by host glycosylation. Intrachain disulfides connect cysteine 192–cysteine 216, cysteine 258–cysteine 271, cysteine 357–cysteine 469, and cysteine 463–cysteine 473. Residues 254–259 (NRKSCS) form an involved in neuraminidase activity region. Asparagine 499 and asparagine 511 each carry an N-linked (GlcNAc...) asparagine; by host glycan. A disulfide bridge links cysteine 535 with cysteine 544.

It belongs to the paramyxoviruses hemagglutinin-neuraminidase family. In terms of assembly, homotetramer; composed of disulfide-linked homodimers. Interacts with F protein trimer. Post-translationally, N-glycosylated; glycans consist of a mixture of high mannose-type oligosaccharides and of complex-type oligosaccharides.

It localises to the virion membrane. The protein resides in the host cell membrane. The enzyme catalyses Hydrolysis of alpha-(2-&gt;3)-, alpha-(2-&gt;6)-, alpha-(2-&gt;8)- glycosidic linkages of terminal sialic acid residues in oligosaccharides, glycoproteins, glycolipids, colominic acid and synthetic substrates.. In terms of biological role, attaches the virus to sialic acid-containing cell receptors and thereby initiating infection. Binding of HN protein to the receptor induces a conformational change that allows the F protein to trigger virion/cell membranes fusion. Neuraminidase activity ensures the efficient spread of the virus by dissociating the mature virions from the neuraminic acid containing glycoproteins. This Sendai virus (strain Z) (SeV) protein is Hemagglutinin-neuraminidase (HN).